Reading from the N-terminus, the 169-residue chain is Allophycocyanin subunit beta-18 (169 aa).

N72 bears the N4-methylasparagine mark. (2R,3E)-phycocyanobilin is bound at residue C82.

Belongs to the phycobiliprotein family. In terms of assembly, heterodimer of ApcE and this beta chain. In terms of processing, contains one covalently linked bilin chromophore. The chromophore is added by phycocyanobilin lyase CpcS 1.

Its subcellular location is the cellular thylakoid membrane. In terms of biological role, a variant beta-allophycocyanin (AP) which forms a complex with ApcE, a phycobilisome terminal emitter that influences energy transfer to photosystem II. This Nostoc sp. (strain PCC 7120 / SAG 25.82 / UTEX 2576) protein is Allophycocyanin subunit beta-18 (apcF).